A 122-amino-acid polypeptide reads, in one-letter code: MIQEQTILHVADNSGARSAMCIKVLGGSRRRYAAIGDVIKITIKEAIPRGKVKKGEVLKAVVVRTKKGVRRSDGSVIRFDTNACVVLNNNEQPIGTRIFGPVTRELRTEKFMKIISLAPEVL.

Belongs to the universal ribosomal protein uL14 family. As to quaternary structure, part of the 50S ribosomal subunit. Forms a cluster with proteins L3 and L19. In the 70S ribosome, L14 and L19 interact and together make contacts with the 16S rRNA in bridges B5 and B8.

Functionally, binds to 23S rRNA. Forms part of two intersubunit bridges in the 70S ribosome. The protein is Large ribosomal subunit protein uL14 of Buchnera aphidicola subsp. Acyrthosiphon pisum (strain 5A).